Here is a 1507-residue protein sequence, read N- to C-terminus: Transient receptor potential cation channel subfamily M member 2 (1507 aa).

Basic and acidic residues predominate over residues 1–11; that stretch reads MEPLDQRRTDS. The disordered stretch occupies residues 1–24; it reads MEPLDQRRTDSDQEEGFGVQSRRA. The Cytoplasmic portion of the chain corresponds to 1-751; the sequence is MEPLDQRRTD…WWGQLCVDNG (751 aa). Residues threonine 173, asparagine 178, arginine 301, glycine 332, and threonine 335 each coordinate ADP-D-ribose. A Phosphothreonine modification is found at threonine 739. An intramembrane segment occupies 752–768; that stretch reads LWRIILCMLAFPLLFTG. Residues 769 to 793 lie on the Cytoplasmic side of the membrane; that stretch reads FISFREKRLQALCRLARVRAFFNAP. Residues 794–814 traverse the membrane as a helical segment; that stretch reads VVIFYLNILSYFAFLCLFAYV. Topologically, residues 815-825 are extracellular; it reads LMVDFQPSPSW. The helical transmembrane segment at 826–846 threads the bilayer; sequence CEYLIYLWLFSLVCEETRQLF. Residues glutamate 841 and glutamine 844 each coordinate Ca(2+). Residues 847-865 lie on the Cytoplasmic side of the membrane; it reads YDPDGCGLMKMASLYFSDF. Residues 866-886 traverse the membrane as a helical segment; the sequence is WNKLDVGAILLFIAGLTCRLI. Asparagine 867 is a Ca(2+) binding site. The Extracellular portion of the chain corresponds to 887 to 894; the sequence is PATLYPGR. Residues 895-915 traverse the membrane as a helical segment; that stretch reads IILSLDFIMFCLRLMHIFTIS. Residues 916-927 lie on the Cytoplasmic side of the membrane; it reads KTLGPKIIIVKR. Residues 928-948 form a helical membrane-spanning segment; that stretch reads MMKDVFFFLFLLAVWVVSFGV. Residues 949 to 968 are Extracellular-facing; that stretch reads AKQAILIHNESRVDWIFRGV. Positions 969–983 form an intramembrane region, pore-forming; it reads IYHSYLTIFGQIPTY. Residues 977–980 carry the Selectivity filter motif; that stretch reads FGQI. Over 984-1020 the chain is Extracellular; the sequence is IDGVNFSMDQCSPNGTDPYKPKCPESDWTGQAPAFPE. Cysteine 994 and cysteine 1006 are joined by a disulfide. A helical transmembrane segment spans residues 1021 to 1042; it reads WLTVTLLCLYLLFANILLLNLL. Residues 1043-1077 are Cytoplasmic-facing; sequence IAMFNYTFQEVQEHTDQIWKFQRHDLIEEYHGRPP. Ca(2+) is bound at residue glutamate 1071. An intramembrane segment occupies 1078 to 1096; it reads APPPLILLSHLQLLIKRIV. The Cytoplasmic segment spans residues 1097–1507; sequence LKIPAKRHKQ…KVASLFGAHF (411 aa). The Nudix hydrolase domain maps to 1351-1502; sequence RWKRNQGGGI…KKILQKVASL (152 aa). Serine 1379 serves as a coordination point for ADP-D-ribose. The Nudix box signature appears at 1387–1408; it reads GSREPGKMLPRKLKQVLQQEYW. 4 residues coordinate ADP-D-ribose: aspartate 1428, arginine 1430, tyrosine 1489, and asparagine 1491.

It belongs to the transient receptor (TC 1.A.4) family. LTrpC subfamily. TRPM2 sub-subfamily. As to quaternary structure, homotetramer. Post-translationally, phosphorylation of TRPM2 at Thr-739 by protein kinase C (PKC) counteracts the effect of cytosolic Ca(2+) and elevates the temperature threshold. Detected in pancreas beta-cells. Detected in fetal brain cortex neurons (at protein level).

Its subcellular location is the cell membrane. It is found in the perikaryon. The protein localises to the cell projection. The protein resides in the cytoplasmic vesicle. It localises to the lysosome. The catalysed reaction is Ca(2+)(in) = Ca(2+)(out). It carries out the reaction Na(+)(in) = Na(+)(out). With respect to regulation, activated by intracellular ADP-ribose, beta-NAD (NAD(+)) and similar compounds, and by oxidative stress caused by reactive oxygen or nitrogen species. Ca(2+) and PI(4,5)P2 are required for channel opening by ADP-ribose. Activation by ADP-ribose and beta-NAD is strongly increased by moderate heat (35 to 40 degrees Celsius). Likewise, reactive oxygen species lower the threshold for activation by moderate heat (37 degrees Celsius). Activated by moderate heat (35 to 40 degrees Celsius). Inactivated by exposure to extracellular pH between 4.0 and 6.5; irreversibly inactivated when open channels are exposed to extracellular pH between 4.0 and 6.5, while pre-exposure of closed channels to extracellular pH 5.5 gives rise to currents that rapidly inactivate, but protects against irreversible inactivation. Inactivated by intracellular ATP. Activated by arachidonic acid. Inhibited by 2-aminoethyl diphenylborinate (2-APB). Nonselective, voltage-independent cation channel that mediates Na(+) and Ca(2+) influx, leading to increased cytoplasmic Ca(2+) levels. Functions as a ligand-gated ion channel gated by intracellular adenosine diphosphate ribose (ADP-ribose), Ca(2+), warm temperature, and oxidative stress. The precise physiological activators are under debate; the true, physiological activators may be ADP-ribose and ADP-ribose-2'-phosphate. Binding of ADP-ribose to the cytoplasmic Nudix domain causes a conformation change; the channel is primed but still requires Ca(2+) binding to trigger channel opening. Extracellular Ca(2+) passes through the channel and increases channel activity. Also contributes to Ca(2+) release from intracellular stores in response to ADP-ribose. Plays a role in numerous processes that involve signaling via intracellular Ca(2+) levels. Besides, mediates the release of lysosomal Zn(2+) stores in response to reactive oxygen species, leading to increased cytosolic Zn(2+) levels. Plays a role in insulin secretion, a process that requires increased cytoplasmic Ca(2+) levels. Required for normal IFNG and cytokine secretion and normal innate immune immunity in response to bacterial infection. Required for normal phagocytosis and cytokine release by macrophages exposed to zymosan (in vitro). Plays a role in dendritic cell differentiation and maturation, and in dendritic cell chemotaxis via its role in regulating cytoplasmic Ca(2+) levels. Plays a role in the regulation of the reorganization of the actin cytoskeleton and filopodia formation in response to reactive oxygen species via its function in increasing cytoplasmic Ca(2+) and Zn(2+) levels. Confers susceptibility to cell death following oxidative stress. This is Transient receptor potential cation channel subfamily M member 2 from Rattus norvegicus (Rat).